The primary structure comprises 144 residues: MPLERTLSIIKPDAVGKHLTGRILARFERAGLQPVAIKMVRLTSEQAEAFYAEHKGREFYQPLIDFMTSGPMVVQVLQAENAINLYREMIGKTDPTQAAAGTIRADFAESTRCNAVHGSDSPASAAKEIAFFFSDDEICPPAAD.

Positions 11, 59, 87, 93, 104, and 114 each coordinate ATP. Catalysis depends on H117, which acts as the Pros-phosphohistidine intermediate.

Belongs to the NDK family. In terms of assembly, homotetramer. Mg(2+) is required as a cofactor.

It is found in the cytoplasm. The enzyme catalyses a 2'-deoxyribonucleoside 5'-diphosphate + ATP = a 2'-deoxyribonucleoside 5'-triphosphate + ADP. The catalysed reaction is a ribonucleoside 5'-diphosphate + ATP = a ribonucleoside 5'-triphosphate + ADP. Major role in the synthesis of nucleoside triphosphates other than ATP. The ATP gamma phosphate is transferred to the NDP beta phosphate via a ping-pong mechanism, using a phosphorylated active-site intermediate. This Psychromonas ingrahamii (strain DSM 17664 / CCUG 51855 / 37) protein is Nucleoside diphosphate kinase.